A 547-amino-acid chain; its full sequence is MCAAEVDRHVSQRYLIKRRLGKGAYGIVWKAMDRRTGEVVAIKKIFDAFRDQTDAQRTFREIMLLREFGGHPNIIRLLDVIPAKNDRDIYLVFESMDTDLNAVIQKGRLLEDIHKRCIFYQLLRATKFIHSGRVIHRDQKPANVLLDAACRVKLCDFGLARSLSDFPEGPGGQALTEYVATRWYRAPEVLLSSRWYTPGVDMWSLGCILGEMLRGQPLFPGTSTFHQLELILETIPLPSMEELQGLGSDYSALILQNLGSRPRQTLDALLPPDTPPEALDLLKRLLAFAPDKRLSAEQALQHPYVQRFHCPDREWTRGSDVRLPVHEGDQLSAPEYRNRLYQMILERRRNSRSPREEDLGVVASRAELRASQRQSLKPGVLPQVLAETPARKRGPKPQNGHGHDPEHVEVRRQSSDPLYQLPPPGSGERPPGATGEPPSAPSGVKTHVRAVAPSLTSQAAAQAANQPLIRSDPARGGGPRAVGARRVPSRLPREAPEPRPGRRMFGISVSQGAQGAARAALGGYSQAYGTVCRSALGRLPLLPGPRA.

The interval 1-20 is ubiquitin-conjugating; that stretch reads MCAAEVDRHVSQRYLIKRRL. One can recognise a Protein kinase domain in the interval 14 to 305; it reads YLIKRRLGKG…AEQALQHPYV (292 aa). Residues 20 to 28 and Lys-43 each bind ATP; that span reads LGKGAYGIV. Asp-138 functions as the Proton acceptor in the catalytic mechanism. At Thr-176 the chain carries Phosphothreonine. The TXY signature appears at 176 to 178; sequence TEY. Tyr-178 carries the post-translational modification Phosphotyrosine. Residues 266–286 are necessary to interact with ESRRA, to regulate its subcellular localization and to inhibit its transcriptional activity; the sequence is LDALLPPDTPPEALDLLKRLL. The interval 301–380 is requires for interaction with GABARAP, MAP1LC3B AND GABARAPL1; the sequence is QHPYVQRFHC…SQRQSLKPGV (80 aa). The segment at 370–503 is disordered; that stretch reads ASQRQSLKPG…EAPEPRPGRR (134 aa). 2 PXXXP motif repeats span residues 378–382 and 385–389; these read PGVLP and LAETP. PXXXP motif; regulates binding with chromatin and interaction with PCNA repeat units follow at residues 393–397 and 401–405; these read RGPKP and HGHDP. Residues 401-414 are compositionally biased toward basic and acidic residues; it reads HGHDPEHVEVRRQS. An Omega-N-methylarginine modification is found at Arg-449. Residues 454–465 show a composition bias toward polar residues; that stretch reads SLTSQAAAQAAN. The span at 481 to 490 shows a compositional bias: low complexity; the sequence is AVGARRVPSR. Basic and acidic residues predominate over residues 491-500; sequence LPREAPEPRP.

Belongs to the protein kinase superfamily. CMGC Ser/Thr protein kinase family. MAP kinase subfamily. As to quaternary structure, interacts with CSK/c-Src, ABL1, RET and TGFB1I1. Interacts with GABARAP, MAP1LC3B and GABARAPL1; controls, in a kinase-dependent fashion, both basal and starvation-induced autophagy. Interacts with ESRRA; promotes re-localization of ESRRA to the cytoplasm through a XPO1-dependent mechanism then inhibits ESRRA transcriptional activity. Interacts with PCNA; the interaction is chromatin binding- and kinase activity-dependent and prevents MDM2-mediated PCNA destruction by inhibiting the association of PCNA with MDM2. Interacts with DVL2. Interacts with CLIC3; MAPK15 does not phosphorylates CLIC3. In terms of processing, autophosphorylated on Thr-176 and Tyr-178; activates the enzyme. Dephosphorylated by PTPN1. Post-translationally, ubiquitinated. Ubiquitination may allow its tight kinase activity regulation and rapid turnover. May be ubiquitinated by a SCF E3 ligase. In terms of tissue distribution, ubiquitously expressed at a weak level. Highest expression is found in testis and to a lower extent in lung.

It localises to the cytoplasm. The protein localises to the cytoskeleton. It is found in the cilium basal body. Its subcellular location is the cell junction. The protein resides in the tight junction. It localises to the microtubule organizing center. The protein localises to the centrosome. It is found in the centriole. Its subcellular location is the cytoplasmic vesicle. The protein resides in the autophagosome. It localises to the golgi apparatus. The protein localises to the nucleus. It is found in the spindle. It carries out the reaction L-seryl-[protein] + ATP = O-phospho-L-seryl-[protein] + ADP + H(+). The enzyme catalyses L-threonyl-[protein] + ATP = O-phospho-L-threonyl-[protein] + ADP + H(+). Activated by threonine and tyrosine phosphorylation. Inhibited by dual specificity phosphatases, such as DUSP1. Phosphorylation and activation in response to DNA damaging agents, serum stimulation. Constitutively activated when phosphorylated on Tyr-178. Activity depends on the relative rates of MAPK15 autophosphorylation and dephosphorylation by PTPN1. Atypical MAPK protein that regulates several process such as autophagy, ciliogenesis, protein trafficking/secretion and genome integrity, in a kinase activity-dependent manner. Controls both, basal and starvation-induced autophagy throught its interaction with GABARAP, MAP1LC3B and GABARAPL1 leading to autophagosome formation, SQSTM1 degradation and reduced MAP1LC3B inhibitory phosphorylation. Regulates primary cilium formation and the localization of ciliary proteins involved in cilium structure, transport, and signaling. Prevents the relocation of the sugar-adding enzymes from the Golgi to the endoplasmic reticulum, thereby restricting the production of sugar-coated proteins. Upon amino-acid starvation, mediates transitional endoplasmic reticulum site disassembly and inhibition of secretion. Binds to chromatin leading to MAPK15 activation and interaction with PCNA, that which protects genomic integrity by inhibiting MDM2-mediated degradation of PCNA. Regulates DA transporter (DAT) activity and protein expression via activation of RhoA. In response to H(2)O(2) treatment phosphorylates ELAVL1, thus preventing it from binding to the PDCD4 3'UTR and rendering the PDCD4 mRNA accessible to miR-21 and leading to its degradation and loss of protein expression. Also functions in a kinase activity-independent manner as a negative regulator of growth. Phosphorylates in vitro FOS and MBP. During oocyte maturation, plays a key role in the microtubule organization and mei- otic cell cycle progression in oocytes, fertilized eggs, and early embryos. Interacts with ESRRA promoting its re-localization from the nucleus to the cytoplasm and then prevents its transcriptional activity. The protein is Mitogen-activated protein kinase 15 (Mapk15) of Rattus norvegicus (Rat).